We begin with the raw amino-acid sequence, 263 residues long: Cytochrome c oxidase subunit 3 (263 aa).

A run of 7 helical transmembrane segments spans residues 7 to 27, 44 to 64, 78 to 98, 120 to 140, 145 to 165, 191 to 211, and 241 to 261; these read ITVL…KAHL, FSVG…VYSI, GMLS…WGIL, LILT…CLQF, GMSL…ECFA, VTGL…IYFI, and ITIL…YFFY.

Belongs to the cytochrome c oxidase subunit 3 family. As to quaternary structure, component of the cytochrome c oxidase (complex IV, CIV), a multisubunit enzyme composed of a catalytic core of 3 subunits and several supernumerary subunits. The complex exists as a monomer or a dimer and forms supercomplexes (SCs) in the inner mitochondrial membrane with ubiquinol-cytochrome c oxidoreductase (cytochrome b-c1 complex, complex III, CIII).

The protein localises to the mitochondrion inner membrane. The catalysed reaction is 4 Fe(II)-[cytochrome c] + O2 + 8 H(+)(in) = 4 Fe(III)-[cytochrome c] + 2 H2O + 4 H(+)(out). Functionally, component of the cytochrome c oxidase, the last enzyme in the mitochondrial electron transport chain which drives oxidative phosphorylation. The respiratory chain contains 3 multisubunit complexes succinate dehydrogenase (complex II, CII), ubiquinol-cytochrome c oxidoreductase (cytochrome b-c1 complex, complex III, CIII) and cytochrome c oxidase (complex IV, CIV), that cooperate to transfer electrons derived from NADH and succinate to molecular oxygen, creating an electrochemical gradient over the inner membrane that drives transmembrane transport and the ATP synthase. Cytochrome c oxidase is the component of the respiratory chain that catalyzes the reduction of oxygen to water. Electrons originating from reduced cytochrome c in the intermembrane space (IMS) are transferred via the dinuclear copper A center (CU(A)) of subunit 2 and heme A of subunit 1 to the active site in subunit 1, a binuclear center (BNC) formed by heme A3 and copper B (CU(B)). The BNC reduces molecular oxygen to 2 water molecules using 4 electrons from cytochrome c in the IMS and 4 protons from the mitochondrial matrix. This chain is Cytochrome c oxidase subunit 3 (COIII), found in Plasmodium vivax.